A 78-amino-acid chain; its full sequence is Xibalbin-13 1 (78 aa).

An N-terminal signal peptide occupies residues 1–27 (MKEANTRRYIHLCLVVVLVSTIITTEA). Residues 28–31 (EDDR) constitute a propeptide that is removed on maturation. 4 disulfide bridges follow: cysteine 34-cysteine 49, cysteine 41-cysteine 54, cysteine 48-cysteine 65, and cysteine 56-cysteine 63. Serine amide is present on serine 76.

Belongs to the xibalbin-13 family. In terms of tissue distribution, expressed by the venom gland.

The protein localises to the secreted. Functionally, probable neurotoxin. Strongly inhibits voltage-gated potassium channels (Kv1.1/KCNA1, Kv1.2/KCNA2, Kv1.3/KCNA3, and Kv1.6/KCNA6) and mildly inhibits sodium channels (Nav1.2/SCN2A, Nav1.4/SCN4A, Nav1.5/SCN5A, Nav1.6/SCN8A, and BgNav). Induces activation of protein kinase A type II (PKA-II) and MAP kinase Erk1/2 in primary nociceptive and non-nociceptive sensory neurons. Does not show cytotoxic activity. Does not have an impact on Ca2+, cAMP, and NO signaling in the cell types analyzed. Does not interfere with the adhesion of leukocytes to endothelial cells. The polypeptide is Xibalbin-13 1 (Xibalbanus tulumensis (Blind cave remipede)).